Consider the following 535-residue polypeptide: GMP synthase [glutamine-hydrolyzing] (535 aa).

The 207-residue stretch at 4–210 (KILILDFGSQ…VHEICHCKPD (207 aa)) folds into the Glutamine amidotransferase type-1 domain. C85 (nucleophile) is an active-site residue. Residues H184 and E186 contribute to the active site. In terms of domain architecture, GMPS ATP-PPase spans 211–403 (WVMGDYIAEA…LGLPREMVYR (193 aa)). An ATP-binding site is contributed by 238–244 (SGGVDSS).

As to quaternary structure, homodimer.

It catalyses the reaction XMP + L-glutamine + ATP + H2O = GMP + L-glutamate + AMP + diphosphate + 2 H(+). It participates in purine metabolism; GMP biosynthesis; GMP from XMP (L-Gln route): step 1/1. Catalyzes the synthesis of GMP from XMP. The chain is GMP synthase [glutamine-hydrolyzing] from Polynucleobacter asymbioticus (strain DSM 18221 / CIP 109841 / QLW-P1DMWA-1) (Polynucleobacter necessarius subsp. asymbioticus).